The sequence spans 714 residues: Rho-GTPase-activating protein RGD2 (714 aa).

The F-BAR domain maps to 2–441 (LSFCDYFWSE…LENDIDPTAD (440 aa)). The 81-residue stretch at 218 to 298 (PKTDYKLPLI…WKNTAYMFAN (81 aa)) folds into the DEP domain. The Rho-GAP domain maps to 475–704 (VDLETRCRLD…DLLTHKKQIF (230 aa)).

In terms of assembly, interacts with CDC42 and RHO5.

Acts in signal transduction. Activates CDC42 and RHO5. The chain is Rho-GTPase-activating protein RGD2 (RGD2) from Saccharomyces cerevisiae (strain ATCC 204508 / S288c) (Baker's yeast).